Reading from the N-terminus, the 529-residue chain is Lysine--tRNA ligase (529 aa).

The 'HIGH' region motif lies at 44–52 (PSGLPHIGT). A 'KMSKS' region motif is present at residues 290–294 (KISKS). K293 lines the ATP pocket.

The protein belongs to the class-I aminoacyl-tRNA synthetase family.

Its subcellular location is the cytoplasm. It catalyses the reaction tRNA(Lys) + L-lysine + ATP = L-lysyl-tRNA(Lys) + AMP + diphosphate. In Rickettsia akari (strain Hartford), this protein is Lysine--tRNA ligase.